Here is a 785-residue protein sequence, read N- to C-terminus: Hyperosmolality-gated Ca2+ permeable channel 1.7 (785 aa).

The chain crosses the membrane as a helical span at residues 7 to 27 (IGLSAAINLLSAFAFLFAFAM). S54 is modified (phosphoserine). 9 helical membrane passes run 101-121 (IYLLGLKMFVPITLLAFGVLV), 156-176 (FWAHITMTYVITFWTCYILYM), 373-393 (LLTTVALFFLIFCFMIPIAFV), 425-445 (FLPGIALKIFLIILPTILMTM), 465-485 (YFWFIIVNVFLGSIITGTAFQ), 510-530 (ATFFITYIMVDGWAGIAAEIL), 582-602 (AVAPILLPFIIVFFAFAYVVF), 628-648 (LIICLIISQLLMMGLLSTKKF), and 651-671 (VTALLLPQPILTFWFYRYCAG). Residues 725–761 (VDEEESNPLVRTKRTSQGTTRYNSEASSSATTTPVAN) form a disordered region. The segment covering 739 to 761 (TSQGTTRYNSEASSSATTTPVAN) has biased composition (polar residues).

It belongs to the CSC1 (TC 1.A.17) family. In terms of processing, phosphorylated and activated by BIK1.

The protein localises to the membrane. The catalysed reaction is Ca(2+)(in) = Ca(2+)(out). Calcium-permeable channel involved in plant stomatal immunity. The polypeptide is Hyperosmolality-gated Ca2+ permeable channel 1.7 (Arabidopsis thaliana (Mouse-ear cress)).